A 327-amino-acid polypeptide reads, in one-letter code: MKMKKLVKSSVASSIALLLLSNTVDAAQHITPVSEKKVDDKITLYKTTATSDNDKLNISQILTFNFIKDKSYDKDTLVLKAAGNINSGYKKPNPKDYNYSQFYWGGKYNVSVSSESNDAVNVVDYAPKNQNEEFQVQQTLGYSYGGDINISNGLSGGLNGSKSFSETINYKQESYRTTIDRKTNHKSIGWGVEAHKIMNNGWGPYGRDSYDPTYGNELFLGGRQSSSNAGQNFLPTHQMPLLARGNFNPEFISVLSHKQNDTKKSKIKVTYQREMDRYTNQWNRLHWVGNNYKNQNTVTFTSTYEVDWQNHTVKLIGTDSKETNPGV.

Residues 1-26 form the signal peptide; it reads MKMKKLVKSSVASSIALLLLSNTVDA.

Belongs to the aerolysin family. As to quaternary structure, toxicity requires sequential binding and synergistic association of a class S and a class F component which form heterooligomeric complexes. LukEv (class S) associates with LukDv (class F).

It is found in the secreted. In terms of biological role, part of a bi-component leucotoxin that acts by forming pores in the membrane of the target cells. The activity of LukEv-LukDv to rabbit leukocytes is similar to that of the Panton-Valentine leucocidin (PVL). LukEv-LukDv is hemolytic to rabbit red blood cells although the activity is only 8% of gamma-hemolysin. This is Leucotoxin LukDv (lukDv) from Staphylococcus aureus (strain NCTC 8325 / PS 47).